A 199-amino-acid polypeptide reads, in one-letter code: Peroxiredoxin-1 (199 aa).

The region spanning 6-165 is the Thioredoxin domain; the sequence is AFIGKPAPDF…TLRLVQAFQF (160 aa). Residue Cys52 is the Cysteine sulfenic acid (-SOH) intermediate of the active site.

Belongs to the peroxiredoxin family. AhpC/Prx1 subfamily. As to quaternary structure, homodimer; disulfide-linked, upon oxidation. 5 homodimers assemble to form a ring-like decamer. Interacts with GDPD5; forms a mixed-disulfide with GDPD5. Interacts with SESN1 and SESN2. In terms of processing, the enzyme can be inactivated by further oxidation of the cysteine sulfenic acid (C(P)-SOH) to sulphinic acid (C(P)-SO2H) instead of its condensation to a disulfide bond. It can be reactivated by forming a transient disulfide bond with sulfiredoxin SRXN1, which reduces the cysteine sulfinic acid in an ATP- and Mg-dependent manner.

The protein resides in the cytoplasm. It carries out the reaction a hydroperoxide + [thioredoxin]-dithiol = an alcohol + [thioredoxin]-disulfide + H2O. Thiol-specific peroxidase that catalyzes the reduction of hydrogen peroxide and organic hydroperoxides to water and alcohols, respectively. Plays a role in cell protection against oxidative stress by detoxifying peroxides and as sensor of hydrogen peroxide-mediated signaling events. Might participate in the signaling cascades of growth factors and tumor necrosis factor-alpha by regulating the intracellular concentrations of H(2)O(2). Reduces an intramolecular disulfide bond in GDPD5 that gates the ability to GDPD5 to drive postmitotic motor neuron differentiation. In Gallus gallus (Chicken), this protein is Peroxiredoxin-1 (PRDX1).